Here is a 508-residue protein sequence, read N- to C-terminus: General transcription factor IIF subunit 1 (508 aa).

N-acetylalanine is present on A2. T156 is modified (phosphothreonine). The tract at residues 177 to 448 (MQQRRLKDQD…SSGDVQVTED (272 aa)) is disordered. Phosphoserine is present on residues S217, S218, S221, and S224. Residues 232-251 (SKAKKKAPVTKAGRKKKKKK) are compositionally biased toward basic residues. 2 stretches are compositionally biased toward acidic residues: residues 255–270 (DEAF…EGQE) and 303–325 (EQSE…EEEE). Position 331 is a phosphothreonine (T331). The segment covering 343–355 (DDSDSSEESDIDS) has biased composition (acidic residues). The segment covering 364–374 (AKKKTPPKRER) has biased composition (basic residues). 4 positions are modified to phosphoserine: S377, S380, S381, and S385. Residues 378–388 (GGSSKGTSRPG) are compositionally biased toward polar residues. T389 carries the post-translational modification Phosphothreonine. Low complexity predominate over residues 389-406 (TPSAEAASTSSTLRAAAS). At S391 the chain carries Phosphoserine. Position 407 is an N6-acetyllysine (K407). The span at 428–443 (GPQSLSGKSTPSSGDV) shows a compositional bias: polar residues. 3 positions are modified to phosphoserine: S431, S433, and S436. Residue T437 is modified to Phosphothreonine. Position 440 is a phosphoserine (S440).

The protein belongs to the TFIIF alpha subunit family. As to quaternary structure, heterodimer of an alpha and a beta subunit. Interacts with GTF2F2, CTDP1, TAF6/TAFII80 and URI1. Interacts with GTF2B (via C-terminus and preferentially via acetylated form); this interaction prevents binding of GTF2B to GTF2F2. Part of TBP-based Pol II pre-initiation complex (PIC), in which Pol II core assembles with general transcription factors and other specific initiation factors including GTF2E1, GTF2E2, GTF2F1, GTF2F2, TCEA1, ERCC2, ERCC3, GTF2H2, GTF2H3, GTF2H4, GTF2H5, GTF2A1, GTF2A2, GTF2B and TBP; this large multi-subunit PIC complex mediates DNA unwinding and targets Pol II core to the transcription start site where the first phosphodiester bond forms. Phosphorylated on Ser and other residues by TAF1 and casein kinase II-like kinases.

It localises to the nucleus. TFIIF is a general transcription initiation factor that binds to RNA polymerase II and helps to recruit it to the initiation complex in collaboration with TFIIB. It promotes transcription elongation. In Rattus norvegicus (Rat), this protein is General transcription factor IIF subunit 1 (Gtf2f1).